The chain runs to 60 residues: Metallothionein (60 aa).

The segment at 1 to 28 is beta; sequence MDPCECSKTGKCSCGGSCTCTNCSCTSC. A divalent metal cation contacts are provided by Cys-4, Cys-6, Cys-12, Cys-14, Cys-18, Cys-20, Cys-23, Cys-25, Cys-28, Cys-32, Cys-33, Cys-35, Cys-36, Cys-40, Cys-43, Cys-47, Cys-49, Cys-54, Cys-58, and Cys-59. The alpha stretch occupies residues 29 to 60; sequence KKSCCPCCPSGCSKCASGCVCKGKTCDTSCCQ.

This sequence belongs to the metallothionein superfamily. Type 1 family.

Functionally, metallothioneins have a high content of cysteine residues that bind various heavy metals. The sequence is that of Metallothionein (mt) from Chelon auratus (Golden grey mullet).